A 273-amino-acid chain; its full sequence is Putative peptidyl-prolyl cis-trans isomerase Cbf2 (273 aa).

The N-terminal stretch at 1–21 is a signal peptide; the sequence is MKKFSLVAATLIAGVVLNVNA. Positions 131 to 228 constitute a PpiC domain; that stretch reads PARVQAKHIL…FGYHVILKEN (98 aa).

It carries out the reaction [protein]-peptidylproline (omega=180) = [protein]-peptidylproline (omega=0). The chain is Putative peptidyl-prolyl cis-trans isomerase Cbf2 (cbf2) from Campylobacter jejuni subsp. jejuni serotype O:2 (strain ATCC 700819 / NCTC 11168).